The primary structure comprises 604 residues: Prostaglandin G/H synthase 2 (604 aa).

The signal sequence occupies residues 1 to 17 (MLARALLLCAAVALSGA). Residues 18-55 (ANPCCSHPCQNRGVCMSVGFDQYKCDCTRTGFYGENCT) enclose the EGF-like domain. 4 disulfides stabilise this stretch: C21/C32, C22/C145, C26/C42, and C44/C54. N53 carries N-linked (GlcNAc...) asparagine glycosylation. A substrate-binding site is contributed by R106. N-linked (GlcNAc...) asparagine glycosylation is present at N130. H193 (proton acceptor) is an active-site residue. Substrate is bound at residue Y341. The For cyclooxygenase activity role is filled by Y371. A heme b-binding site is contributed by H374. A glycan (N-linked (GlcNAc...) asparagine) is linked at N396. C526 bears the S-nitrosocysteine mark. A disulfide bond links C555 and C561. S565 is subject to O-acetylserine. N-linked (GlcNAc...) asparagine glycosylation is present at N580.

It belongs to the prostaglandin G/H synthase family. In terms of assembly, homodimer. It depends on heme b as a cofactor. In terms of processing, S-nitrosylation by NOS2 (iNOS) activates enzyme activity. S-nitrosylation may take place on different Cys residues in addition to Cys-526. Post-translationally, acetylated at Ser-565 by SPHK1. During neuroinflammation, acetylation by SPHK1 promotes neuronal secretion of specialized preresolving mediators (SPMs), especially 15-R-lipoxin A4, which results in an increase of phagocytic microglia.

The protein localises to the microsome membrane. Its subcellular location is the endoplasmic reticulum membrane. The protein resides in the nucleus inner membrane. It localises to the nucleus outer membrane. The catalysed reaction is (5Z,8Z,11Z,14Z)-eicosatetraenoate + AH2 + 2 O2 = prostaglandin H2 + A + H2O. The enzyme catalyses (5Z,8Z,11Z,14Z)-eicosatetraenoate + 2 O2 = prostaglandin G2. It carries out the reaction prostaglandin G2 + AH2 = prostaglandin H2 + A + H2O. It catalyses the reaction (5Z,8Z,11Z,14Z,17Z)-eicosapentaenoate + 2 O2 = prostaglandin G3. The catalysed reaction is prostaglandin G3 + AH2 = prostaglandin H3 + A + H2O. The enzyme catalyses (8Z,11Z,14Z)-eicosatrienoate + 2 O2 = prostaglandin G1. It carries out the reaction prostaglandin G1 + AH2 = prostaglandin H1 + A + H2O. It catalyses the reaction 2-(5Z,8Z,11Z,14Z)-eicosatetraenoyl-sn-glycero-3-phosphoethanolamine + 2 O2 = 2-(prostaglandin G2)-sn-glycero-3-phosphoethanolamine. The catalysed reaction is 2-(prostaglandin G2)-sn-glycero-3-phosphoethanolamine + AH2 = 2-(prostaglandin H2)-sn-glycero-3-phosphoethanolamine + A + H2O. The enzyme catalyses 2-(5Z,8Z,11Z,14Z)-eicosatetraenoyl-sn-glycero-3-phosphocholine + 2 O2 = 2-(prostaglandin G2)-sn-glycero-3-phosphocholine. It carries out the reaction 2-(prostaglandin G2)-sn-glycero-3-phosphocholine + AH2 = 2-(prostaglandin H2)-sn-glycero-3-phosphocholine + A + H2O. It catalyses the reaction (15S)-hydroperoxy-(5Z,8Z,11Z,13E)-eicosatetraenoate + AH2 = (15S)-hydroxy-(5Z,8Z,11Z,13E)-eicosatetraenoate + A + H2O. The catalysed reaction is 2-(5Z,8Z,11Z,14Z)-eicosatetraenoyl-sn-glycero-3-phosphocholine + AH2 + O2 = 2-[(15S)-hydroxy-(5Z,8Z,11Z,13E)-eicosatetraenoyl]-sn-glycero-3-phosphocholine + A + H2O. The enzyme catalyses 2-(5Z,8Z,11Z,14Z)-eicosatetraenoyl-sn-glycero-3-phosphocholine + AH2 + O2 = 2-[(15R)-hydroxy-(5Z,8Z,11Z,13E)-eicosatetraenoyl]-sn-glycero-3-phosphocholine + A + H2O. It carries out the reaction 2-(5Z,8Z,11Z,14Z)-eicosatetraenoyl-sn-glycero-3-phosphocholine + AH2 + O2 = 2-[(11R)-hydroxy-(5Z,8Z,12E,14Z)-eicosatetraenoyl]-sn-glycero-3-phosphocholine + A + H2O. It catalyses the reaction (9Z,12Z)-octadecadienoate + AH2 + O2 = 9-hydroxy-(10E,12Z)-octadecadienoate + A + H2O. The catalysed reaction is (9Z,12Z)-octadecadienoate + AH2 + O2 = 13-hydroxy-(9Z,11E)-octadecadienoate + A + H2O. The enzyme catalyses (5Z,8Z,11Z,14Z)-eicosatetraenoate + AH2 + O2 = (15R)-hydroxy-(5Z,8Z,11Z,13E)-eicosatetraenoate + A + H2O. It carries out the reaction (5Z,8Z,11Z,14Z)-eicosatetraenoate + AH2 + O2 = (11R)-hydroxy-(5Z,8Z,12E,14Z)-eicosatetraenoate + A + H2O. It catalyses the reaction (5Z,8Z,11Z,14Z,17Z)-eicosapentaenoate + AH2 + O2 = (11R)-hydroxy-(5Z,8Z,12E,14Z,17Z)-eicosapentaenoate + A + H2O. The catalysed reaction is (5Z,8Z,11Z,14Z,17Z)-eicosapentaenoate + AH2 + O2 = (18S)-hydroxy-(5Z,8Z,11Z,14Z,16E)-eicosapentaenoate + A + H2O. The enzyme catalyses (5Z,8Z,11Z,14Z,17Z)-eicosapentaenoate + AH2 + O2 = (18R)-hydroxy-(5Z,8Z,11Z,14Z,16E)-eicosapentaenoate + A + H2O. It carries out the reaction (5Z,8Z,11Z,14Z,17Z)-eicosapentaenoate + AH2 + O2 = (15R)-hydroxy-(5Z,8Z,11Z,13E,17Z)-eicosapentaenoate + A + H2O. It catalyses the reaction (5Z,8Z,11Z,14Z,17Z)-eicosapentaenoate + AH2 + O2 = (15S)-hydroxy-(5Z,8Z,11Z,13E,17Z)-eicosapentaenoate + A + H2O. The catalysed reaction is (7Z,10Z,13Z,16Z,19Z)-docosapentaenoate + AH2 + O2 = 13R-hydroxy-(7Z,10Z,14E,16Z,19Z)-docosapentaenoate + A + H2O. The enzyme catalyses (4Z,7Z,10Z,13Z,16Z,19Z)-docosahexaenoate + AH2 + O2 = 13-hydroxy-(4Z,7Z,10Z,14E,16Z,19Z)-docosahexaenoate + A + H2O. It carries out the reaction (5S)-hydroxy-(6E,8Z,11Z,14Z)-eicosatetraenoate + AH2 + O2 = (5S,15R)-dihydroxy-(6E,8Z,11Z,13E)-eicosatetraenoate + A + H2O. It catalyses the reaction (4Z,7Z,10Z,13Z,16Z,19Z)-docosahexaenoate + AH2 + O2 = 17R-hydroxy-(4Z,7Z,10Z,13Z,15E,19Z)-docosahexaenoate + A + H2O. The catalysed reaction is (5S)-hydroxy-(6E,8Z,11Z,14Z)-eicosatetraenoate + AH2 + O2 = (5S,15S)-dihydroxy-(6E,8Z,11Z,13E)-eicosatetraenoate + A + H2O. The enzyme catalyses (5S)-hydroxy-(6E,8Z,11Z,14Z)-eicosatetraenoate + AH2 + O2 = (5S,11R)-dihydroxy-(6E,8Z,12E,14Z)-eicosatetraenoate + A + H2O. It carries out the reaction 2-(5Z,8Z,11Z,14Z-eicosatetraenoyl)-glycerol + 2 O2 = 2-glyceryl-prostaglandin G2. It catalyses the reaction 2-glyceryl-prostaglandin G2 + AH2 = 2-glyceryl-prostaglandin H2 + A + H2O. The catalysed reaction is (5Z,8Z,11Z,14Z)-eicosatetraenoate + O2 = (15R)-hydroperoxy-(5Z,8Z,11Z,13E)-eicosatetraenoate. The enzyme catalyses (5Z,8Z,11Z,14Z)-eicosatetraenoate + O2 = 11R-hydroperoxy-(5Z,8Z,12E,14Z)-eicosatetraenoate. It carries out the reaction (9Z,12Z)-octadecadienoate + AH2 + O2 = (9R)-hydroxy-(10E,12Z)-octadecadienoate + A + H2O. It catalyses the reaction (9Z,12Z)-octadecadienoate + AH2 + O2 = (9S)-hydroxy-(10E,12Z)-octadecadienoate + A + H2O. The catalysed reaction is (9Z,12Z)-octadecadienoate + AH2 + O2 = (13S)-hydroxy-(9Z,11E)-octadecadienoate + A + H2O. The enzyme catalyses (9Z,12Z)-octadecadienoate + AH2 + O2 = (13R)-hydroxy-(9Z,11E)-octadecadienoate + A + H2O. The protein operates within lipid metabolism; prostaglandin biosynthesis. In terms of biological role, dual cyclooxygenase and peroxidase in the biosynthesis pathway of prostanoids, a class of C20 oxylipins mainly derived from arachidonate ((5Z,8Z,11Z,14Z)-eicosatetraenoate, AA, C20:4(n-6)), with a particular role in the inflammatory response. The cyclooxygenase activity oxygenates AA to the hydroperoxy endoperoxide prostaglandin G2 (PGG2), and the peroxidase activity reduces PGG2 to the hydroxy endoperoxide prostaglandin H2 (PGH2), the precursor of all 2-series prostaglandins and thromboxanes. This complex transformation is initiated by abstraction of hydrogen at carbon 13 (with S-stereochemistry), followed by insertion of molecular O2 to form the endoperoxide bridge between carbon 9 and 11 that defines prostaglandins. The insertion of a second molecule of O2 (bis-oxygenase activity) yields a hydroperoxy group in PGG2 that is then reduced to PGH2 by two electrons. Similarly catalyzes successive cyclooxygenation and peroxidation of dihomo-gamma-linoleate (DGLA, C20:3(n-6)) and eicosapentaenoate (EPA, C20:5(n-3)) to corresponding PGH1 and PGH3, the precursors of 1- and 3-series prostaglandins. In an alternative pathway of prostanoid biosynthesis, converts 2-arachidonoyl lysophopholipids to prostanoid lysophopholipids, which are then hydrolyzed by intracellular phospholipases to release free prostanoids. Metabolizes 2-arachidonoyl glycerol yielding the glyceryl ester of PGH2, a process that can contribute to pain response. Generates lipid mediators from n-3 and n-6 polyunsaturated fatty acids (PUFAs) via a lipoxygenase-type mechanism. Oxygenates PUFAs to hydroperoxy compounds and then reduces them to corresponding alcohols. Plays a role in the generation of resolution phase interaction products (resolvins) during both sterile and infectious inflammation. Metabolizes docosahexaenoate (DHA, C22:6(n-3)) to 17R-HDHA, a precursor of the D-series resolvins (RvDs). As a component of the biosynthetic pathway of E-series resolvins (RvEs), converts eicosapentaenoate (EPA, C20:5(n-3)) primarily to 18S-HEPE that is further metabolized by ALOX5 and LTA4H to generate 18S-RvE1 and 18S-RvE2. In vascular endothelial cells, converts docosapentaenoate (DPA, C22:5(n-3)) to 13R-HDPA, a precursor for 13-series resolvins (RvTs) shown to activate macrophage phagocytosis during bacterial infection. In activated leukocytes, contributes to oxygenation of hydroxyeicosatetraenoates (HETE) to diHETES (5,15-diHETE and 5,11-diHETE). Can also use linoleate (LA, (9Z,12Z)-octadecadienoate, C18:2(n-6)) as substrate and produce hydroxyoctadecadienoates (HODEs) in a regio- and stereospecific manner, being (9R)-HODE ((9R)-hydroxy-(10E,12Z)-octadecadienoate) and (13S)-HODE ((13S)-hydroxy-(9Z,11E)-octadecadienoate) its major products. During neuroinflammation, plays a role in neuronal secretion of specialized preresolving mediators (SPMs) 15R-lipoxin A4 that regulates phagocytic microglia. The protein is Prostaglandin G/H synthase 2 (PTGS2) of Bos taurus (Bovine).